The chain runs to 80 residues: Large ribosomal subunit protein bL31B (80 aa).

This sequence belongs to the bacterial ribosomal protein bL31 family. Type B subfamily. In terms of assembly, part of the 50S ribosomal subunit.

The sequence is that of Large ribosomal subunit protein bL31B from Xanthomonas axonopodis pv. citri (strain 306).